A 1806-amino-acid chain; its full sequence is uncharacterized protein (1806 aa).

Disordered stretches follow at residues 38-131 and 158-282; these read EASG…SPLF and KAVS…KPRP. Positions 51–70 are enriched in low complexity; the sequence is KSPLRSPARLLPLPRLAPKP. Phosphoserine is present on residues Ser52, Ser56, Ser79, Ser87, Ser88, Ser92, and Ser128. A compositionally biased stretch (low complexity) spans 82 to 100; sequence PSLRPSSTGPSPSGGLSEE. Basic and acidic residues predominate over residues 226-236; sequence DTARPLVEPRP. A phosphoserine mark is found at Ser244 and Ser284. 4 disordered regions span residues 299–320, 355–431, 456–604, and 627–696; these read RKVA…ERPR, KEKM…GGEW, SESP…PEDD, and QSGR…ELRP. Ser366 is modified (phosphoserine). Thr378 bears the Phosphothreonine mark. Phosphoserine is present on Ser384. A compositionally biased stretch (basic and acidic residues) spans 386–400; the sequence is WEEKAKLDPEPEKAA. At Ser404 the chain carries Phosphoserine. Over residues 412-422 the composition is skewed to basic and acidic residues; the sequence is ELAEVKSRVAD. A compositionally biased stretch (low complexity) spans 456 to 470; it reads SESPLATPASPSAAP. 2 positions are modified to phosphoserine: Ser458 and Ser508. Residues 514 to 523 are compositionally biased toward polar residues; that stretch reads LFSSSASSNE. 2 stretches are compositionally biased toward basic and acidic residues: residues 524–549 and 564–573; these read VKYE…EGHS and TLRDKSRQTE. At Thr600 the chain carries Phosphothreonine. 2 stretches are compositionally biased toward basic and acidic residues: residues 641 to 652 and 661 to 674; these read AHARVSEPRPRP and DPPD…ENSR. Ser749 is subject to Phosphoserine. Disordered regions lie at residues 860 to 901, 969 to 989, and 1000 to 1019; these read QHEG…QART, SPHV…ALRK, and QEVN…KQGS. The segment covering 889–900 has biased composition (polar residues); the sequence is RATNGPSDSQAR. A phosphoserine mark is found at Ser969 and Ser981. Residues 969–978 are compositionally biased toward basic and acidic residues; it reads SPHVGHRRTD. At Thr1059 the chain carries Phosphothreonine. Ser1063 and Ser1154 each carry phosphoserine. The tract at residues 1134–1178 is disordered; that stretch reads RGSEDGPRPQSNWKESANKMSPSGGAPQTTPTLRSRPKDLPVRRK. Residues 1142–1166 are compositionally biased toward polar residues; it reads PQSNWKESANKMSPSGGAPQTTPTL. Thr1163 is subject to Phosphothreonine. Over residues 1169–1178 the composition is skewed to basic and acidic residues; that stretch reads RPKDLPVRRK. Residues Thr1179 and Thr1185 each carry the phosphothreonine modification. 2 disordered regions span residues 1216–1265 and 1291–1493; these read PGEA…PASS and KSSP…VASV. Ser1224 is modified (phosphoserine). A Phosphothreonine modification is found at Thr1226. Basic and acidic residues-rich tracts occupy residues 1244-1254 and 1317-1331; these read EQRRRSLKEMP and DPRK…DRKA. Ser1366 is subject to Phosphoserine. 2 stretches are compositionally biased toward basic and acidic residues: residues 1393 to 1410 and 1426 to 1437; these read DHPR…RAYS and HEARERRREQPK. Ser1441 bears the Phosphoserine mark. The segment covering 1462 to 1483 has biased composition (basic and acidic residues); it reads DSHKVLPRDLEKEDAPQEKERP. Ser1488 and Ser1506 each carry phosphoserine. Disordered regions lie at residues 1512–1627 and 1642–1806; these read QLKQ…KRVD and ALKT…ENQV. The span at 1522–1531 shows a compositional bias: basic and acidic residues; that stretch reads TEPKDTDTLV. Residues 1537–1568 are compositionally biased toward polar residues; the sequence is QYGTWTEQCQSGESLATESPDSSATSTRKQPP. Residues Ser1555 and Ser1662 each carry the phosphoserine modification. Over residues 1649–1666 the composition is skewed to basic residues; the sequence is LSKRSRRRAPISHSLRRS. Composition is skewed to basic and acidic residues over residues 1667 to 1677 and 1689 to 1714; these read RFSESESRSPL and DSTE…ERTP. 4 positions are modified to phosphoserine: Ser1701, Ser1757, Ser1760, and Ser1786. Residues 1753-1764 show a composition bias toward low complexity; it reads PQPKSPKSPFQP.

This is an uncharacterized protein from Homo sapiens (Human).